The chain runs to 644 residues: Tripeptidyl-peptidase sed1 (644 aa).

The signal sequence occupies residues 1–18 (MRLSHVLLGTAAAAGVLA). The propeptide at 19 to 196 (SPTPNDYVVH…KARSIEKRSF (178 aa)) is removed in mature form. In terms of domain architecture, Peptidase S53 spans 224–643 (AITPLCISAL…PALLDLFMSL (420 aa)). N-linked (GlcNAc...) asparagine glycosylation is present at N235. Catalysis depends on charge relay system residues E300 and D304. N326, N332, and N519 each carry an N-linked (GlcNAc...) asparagine glycan. S561 acts as the Charge relay system in catalysis. Residues D602, I603, G621, and D623 each contribute to the Ca(2+) site.

The cofactor is Ca(2+). N-glycosylated.

The protein localises to the secreted. The protein resides in the extracellular space. It catalyses the reaction Release of an N-terminal tripeptide from a polypeptide.. In terms of biological role, secreted tripeptidyl-peptidase which degrades proteins at acidic pHs and is involved in virulence. The sequence is that of Tripeptidyl-peptidase sed1 (sed1) from Aspergillus fumigatus (strain ATCC MYA-4609 / CBS 101355 / FGSC A1100 / Af293) (Neosartorya fumigata).